The following is a 309-amino-acid chain: Probable manganese-dependent inorganic pyrophosphatase (309 aa).

6 residues coordinate Mn(2+): His-9, Asp-13, Asp-15, Asp-75, His-97, and Asp-149.

The protein belongs to the PPase class C family. Requires Mn(2+) as cofactor.

It is found in the cytoplasm. The catalysed reaction is diphosphate + H2O = 2 phosphate + H(+). The polypeptide is Probable manganese-dependent inorganic pyrophosphatase (Exiguobacterium sp. (strain ATCC BAA-1283 / AT1b)).